A 415-amino-acid chain; its full sequence is Adenylosuccinate synthetase (415 aa).

GTP-binding positions include 11–17 and 39–41; these read GDEGKGK and GHT. The active-site Proton acceptor is the D12. Positions 12 and 39 each coordinate Mg(2+). Residues 12 to 15, 37 to 40, T124, R138, Q218, T233, and R297 contribute to the IMP site; these read DEGK and NAGH. Catalysis depends on H40, which acts as the Proton donor. Residue 293 to 299 coordinates substrate; that stretch reads TTTGRAR. GTP contacts are provided by residues R299, 325 to 327, and 403 to 405; these read KLD and STS.

It belongs to the adenylosuccinate synthetase family. As to quaternary structure, homodimer. Mg(2+) serves as cofactor.

The protein localises to the cytoplasm. The catalysed reaction is IMP + L-aspartate + GTP = N(6)-(1,2-dicarboxyethyl)-AMP + GDP + phosphate + 2 H(+). It participates in purine metabolism; AMP biosynthesis via de novo pathway; AMP from IMP: step 1/2. In terms of biological role, plays an important role in the de novo pathway of purine nucleotide biosynthesis. Catalyzes the first committed step in the biosynthesis of AMP from IMP. The polypeptide is Adenylosuccinate synthetase (Helicobacter hepaticus (strain ATCC 51449 / 3B1)).